The sequence spans 942 residues: ATP-dependent RNA helicase DDX42 (942 aa).

Residues 1-18 (MNWNKGGPGTKRGFGFGG) are compositionally biased toward gly residues. Positions 1–114 (MNWNKGGPGT…KPIDSDSDDD (114 aa)) are disordered. The residue at position 5 (lysine 5) is an N6-acetyllysine. Position 12 is an omega-N-methylarginine (arginine 12). Positions 35–52 (SHSAFGATSSSSGFGKSA) are enriched in low complexity. Serine 58 is subject to Phosphoserine. Residues 70 to 84 (DEENAYFEDEEEDSS) are compositionally biased toward acidic residues. Serine 96, serine 104, serine 109, and serine 111 each carry phosphoserine. Residues 116–157 (LEAFMAEVEDQAARDMKRLEEKDKERKNVKGIRDDIEEEDDQ) adopt a coiled-coil conformation. Residues 182 to 203 (EYDSDGNPIAPTKKIIDPLPPI) are disordered. Serine 185 is modified (phosphoserine). A Q motif motif is present at residues 253–281 (SSFAHFGFDEQLMHQIRKSEYTQPTPIQC). The Helicase ATP-binding domain occupies 284 to 459 (VPVALSGRDM…RDILIDPIRV (176 aa)). 297–304 (AKTGSGKT) contributes to the ATP binding site. The DEAD box signature appears at 407 to 410 (DEAD). Residues 487 to 632 (WLTRRLVEFT…HVSKELLDLA (146 aa)) form the Helicase C-terminal domain. Composition is skewed to polar residues over residues 737-760 (LNSV…TSAT) and 786-798 (GVNN…NSRE). Disordered stretches follow at residues 737–762 (LNSV…ATKG) and 783–942 (GAQG…RWDS). The tract at residues 738–833 (NSVPTNSAQQ…TGNRHSDSPR (96 aa)) is necessary for interaction with TP53BP2. The residue at position 754 (serine 754) is a Phosphoserine. Residues 820-924 (SHGETGNRHS…KVDSKTDKTA (105 aa)) are compositionally biased toward basic and acidic residues. Lysine 899 participates in a covalent cross-link: Glycyl lysine isopeptide (Lys-Gly) (interchain with G-Cter in SUMO2).

It belongs to the DEAD box helicase family. DDX42 subfamily. Transient component of the SF3B subcomplex of the 17S U2 SnRNP complex. Interacts (via the C-terminus) with TP53BP2; the interaction is not inhibitied by TP53BP2 ubiquitination and is independent of p53/TP53.

The protein resides in the cytoplasm. Its subcellular location is the nucleus. It catalyses the reaction ATP + H2O = ADP + phosphate + H(+). ATP-dependent RNA helicase that binds to partially double-stranded RNAs (dsRNAs) in order to unwind RNA secondary structures. Unwinding is promoted in the presence of single-strand binding proteins. Also mediates RNA duplex formation thereby displacing the single-strand RNA binding protein. ATP and ADP modulate its activity: ATP binding and hydrolysis by DDX42 triggers RNA strand separation, whereas the ADP-bound form of the protein triggers annealing of complementary RNA strands. Required for assembly of the 17S U2 SnRNP complex of the spliceosome, a large ribonucleoprotein complex that removes introns from transcribed pre-mRNAs: DDX42 associates transiently with the SF3B subcomplex of the 17S U2 SnRNP complex and is released after fulfilling its role in the assembly of 17S U2 SnRNP. Involved in the survival of cells by interacting with TP53BP2 and thereby counteracting the apoptosis-stimulating activity of TP53BP2. Relocalizes TP53BP2 to the cytoplasm. The sequence is that of ATP-dependent RNA helicase DDX42 (DDX42) from Pongo abelii (Sumatran orangutan).